We begin with the raw amino-acid sequence, 815 residues long: Lon protease 1 (815 aa).

In terms of domain architecture, Lon N-terminal spans 14–211 (IAILPLLGTV…KLNEVLTREL (198 aa)). 370 to 377 (GPPGVGKT) serves as a coordination point for ATP. In terms of domain architecture, Lon proteolytic spans 606-787 (TDRPGIVTGL…GQVIELALRA (182 aa)). Residues Ser693 and Lys736 contribute to the active site.

It belongs to the peptidase S16 family. In terms of assembly, homohexamer. Organized in a ring with a central cavity.

It localises to the cytoplasm. The enzyme catalyses Hydrolysis of proteins in presence of ATP.. ATP-dependent serine protease that mediates the selective degradation of mutant and abnormal proteins as well as certain short-lived regulatory proteins. Required for cellular homeostasis and for survival from DNA damage and developmental changes induced by stress. Degrades polypeptides processively to yield small peptide fragments that are 5 to 10 amino acids long. Binds to DNA in a double-stranded, site-specific manner. The polypeptide is Lon protease 1 (Herpetosiphon aurantiacus (strain ATCC 23779 / DSM 785 / 114-95)).